We begin with the raw amino-acid sequence, 146 residues long: Large ribosomal subunit protein uL15 (146 aa).

Residues 1–54 (MKLHELRPAAGSKSAPKRVGRGTGSGLGRNAGKGEKGQNARSGGGVRPGFEGGQ) are disordered. Gly residues-rich tracts occupy residues 21-31 (RGTGSGLGRNA) and 42-52 (SGGGVRPGFEG).

The protein belongs to the universal ribosomal protein uL15 family. In terms of assembly, part of the 50S ribosomal subunit.

Its function is as follows. Binds to the 23S rRNA. The protein is Large ribosomal subunit protein uL15 of Clostridium perfringens (strain ATCC 13124 / DSM 756 / JCM 1290 / NCIMB 6125 / NCTC 8237 / Type A).